A 327-amino-acid chain; its full sequence is Spermidine/putrescine import ATP-binding protein PotA (327 aa).

One can recognise an ABC transporter domain in the interval 5 to 235 (IKVEAVEKHF…PKTLFVATFI (231 aa)). 37-44 (GPSGCGKT) serves as a coordination point for ATP.

The protein belongs to the ABC transporter superfamily. Spermidine/putrescine importer (TC 3.A.1.11.1) family. As to quaternary structure, the complex is composed of two ATP-binding proteins (PotA), two transmembrane proteins (PotB and PotC) and a solute-binding protein (PotD).

The protein localises to the cell membrane. It carries out the reaction ATP + H2O + polyamine-[polyamine-binding protein]Side 1 = ADP + phosphate + polyamineSide 2 + [polyamine-binding protein]Side 1.. Its function is as follows. Part of the ABC transporter complex PotABCD involved in spermidine/putrescine import. Responsible for energy coupling to the transport system. The chain is Spermidine/putrescine import ATP-binding protein PotA from Bacillus thuringiensis (strain Al Hakam).